A 653-amino-acid polypeptide reads, in one-letter code: Endoglin (653 aa).

The first 24 residues, 1–24, serve as a signal peptide directing secretion; it reads MDRGVLPQAIALLLAVCSFGPTAG. Residues 25–581 are Extracellular-facing; the sequence is LAEGVQCDLQ…IVSPGLPDKG (557 aa). The tract at residues 27–44 is OR1, N-terminal part; sequence EGVQCDLQPVDPKVTYTT. Residues 27-336 form a required for interaction with GDF2 region; the sequence is EGVQCDLQPV…RSCGSGLQPS (310 aa). 7 disulfides stabilise this stretch: Cys-31/Cys-206, Cys-51/Cys-181, Cys-241/Cys-329, Cys-349/Cys-381, Cys-362/Cys-442, Cys-393/Cys-411, and Cys-493/Cys-549. Positions 45-198 are OR2; it reads SQVSEGCVAH…MGHTLEWKSH (154 aa). N-linked (GlcNAc...) asparagine glycosylation is present at Asn-57. An OR1, C-terminal part region spans residues 199 to 329; sequence TQASVLGCHL…SVISLQDRSC (131 aa). The tract at residues 269-281 is essential for interaction with GDF2; it reads KAWTTGEYSFKIF. N-linked (GlcNAc...) asparagine glycosylation occurs at Asn-306. The ZP domain maps to 362-512; that stretch reads CSDDVMTLVL…MVDLIQNQEA (151 aa). A helical transmembrane segment spans residues 582–606; it reads LVLPAVLGITFGAFLIGALLTAALW. The Cytoplasmic segment spans residues 607–653; that stretch reads YIHSHTRHPGKREPVVAVAAPASSESSSTNHSIGSTQSTPCSTSSMA. The segment covering 625–634 has biased composition (low complexity); it reads AAPASSESSS. Positions 625–653 are disordered; the sequence is AAPASSESSSTNHSIGSTQSTPCSTSSMA. The span at 635–653 shows a compositional bias: polar residues; sequence TNHSIGSTQSTPCSTSSMA. A phosphoserine; by TGFBR1 mark is found at Ser-641 and Ser-644.

Homodimer; disulfide-linked. Forms a heteromeric complex with the signaling receptors for transforming growth factor-beta: TGFBR1 and/or TGFBR2. It is able to bind TGFB1 and TGFB2 with high affinity, but not TGFB3. Interacts with GDF2, forming a heterotetramer with a 2:2 stoichiometry. Interacts with ACVRL1. Can form a heteromeric complex with GDF2 and ACVRL1. Interacts with BMP10. Interacts with DYNLT4. Interacts with ARRB2.

The protein localises to the cell membrane. Vascular endothelium glycoprotein that plays an important role in the regulation of angiogenesis. Required for normal structure and integrity of adult vasculature. Regulates the migration of vascular endothelial cells. Required for normal extraembryonic angiogenesis and for embryonic heart development. May regulate endothelial cell shape changes in response to blood flow, which drive vascular remodeling and establishment of normal vascular morphology during angiogenesis. May play a role in the binding of endothelial cells to integrins. Acts as a TGF-beta coreceptor and is involved in the TGF-beta/BMP signaling cascade that ultimately leads to the activation of SMAD transcription factors. Required for GDF2/BMP9 signaling through SMAD1 in endothelial cells and modulates TGFB1 signaling through SMAD3. This chain is Endoglin (ENG), found in Sus scrofa (Pig).